The following is a 250-amino-acid chain: Ribosomal RNA small subunit methyltransferase J (250 aa).

Residues 96–97 and Asp168 each bind S-adenosyl-L-methionine; that span reads RD.

Belongs to the methyltransferase superfamily. RsmJ family.

Its subcellular location is the cytoplasm. The catalysed reaction is guanosine(1516) in 16S rRNA + S-adenosyl-L-methionine = N(2)-methylguanosine(1516) in 16S rRNA + S-adenosyl-L-homocysteine + H(+). Functionally, specifically methylates the guanosine in position 1516 of 16S rRNA. This is Ribosomal RNA small subunit methyltransferase J from Neisseria meningitidis serogroup C / serotype 2a (strain ATCC 700532 / DSM 15464 / FAM18).